Consider the following 467-residue polypeptide: Histone acetyltransferase type B catalytic subunit (467 aa).

The disordered stretch occupies residues 1–24; the sequence is MVQKQQASAGPGTEPKKRRRVGFS. Acetyl-CoA contacts are provided by residues 249-251 and 256-262; these read ILV and QGKGLGS. Residue Glu283 is the Proton donor/acceptor of the active site.

The protein belongs to the HAT1 family.

The protein localises to the nucleus. Its subcellular location is the cytoplasm. The enzyme catalyses L-lysyl-[protein] + acetyl-CoA = N(6)-acetyl-L-lysyl-[protein] + CoA + H(+). Functionally, acetylates soluble but not nucleosomal H4. Acetylates 'Lys-12' of histone H4. In Arabidopsis thaliana (Mouse-ear cress), this protein is Histone acetyltransferase type B catalytic subunit (HAG2).